The primary structure comprises 193 residues: NADH-quinone oxidoreductase subunit B (193 aa).

The tract at residues 1–25 (MGLNDSSGTLVAPKPKGIIDPNTGR) is disordered. The [4Fe-4S] cluster site is built by cysteine 72, cysteine 73, cysteine 137, and cysteine 167.

Belongs to the complex I 20 kDa subunit family. NDH-1 is composed of 14 different subunits. Subunits NuoB, C, D, E, F, and G constitute the peripheral sector of the complex. Requires [4Fe-4S] cluster as cofactor.

The protein localises to the cell inner membrane. It carries out the reaction a quinone + NADH + 5 H(+)(in) = a quinol + NAD(+) + 4 H(+)(out). Functionally, NDH-1 shuttles electrons from NADH, via FMN and iron-sulfur (Fe-S) centers, to quinones in the respiratory chain. Couples the redox reaction to proton translocation (for every two electrons transferred, four hydrogen ions are translocated across the cytoplasmic membrane), and thus conserves the redox energy in a proton gradient. In Mesorhizobium japonicum (strain LMG 29417 / CECT 9101 / MAFF 303099) (Mesorhizobium loti (strain MAFF 303099)), this protein is NADH-quinone oxidoreductase subunit B.